An 88-amino-acid chain; its full sequence is UPF0335 protein MexAM1_META1p2947 (88 aa).

The protein belongs to the UPF0335 family.

The protein is UPF0335 protein MexAM1_META1p2947 of Methylorubrum extorquens (strain ATCC 14718 / DSM 1338 / JCM 2805 / NCIMB 9133 / AM1) (Methylobacterium extorquens).